The sequence spans 99 residues: Putative UPF0320 protein YDR543C (99 aa).

The disordered stretch occupies residues 80–99 (EKSPPKSPKHKNILSFNNNT).

The protein belongs to the UPF0320 family.

The chain is Putative UPF0320 protein YDR543C from Saccharomyces cerevisiae (strain ATCC 204508 / S288c) (Baker's yeast).